Consider the following 305-residue polypeptide: Acetylglutamate kinase (305 aa).

Substrate is bound by residues glycine 80 to glycine 81, arginine 102, and asparagine 196.

This sequence belongs to the acetylglutamate kinase family. ArgB subfamily.

It localises to the cytoplasm. The catalysed reaction is N-acetyl-L-glutamate + ATP = N-acetyl-L-glutamyl 5-phosphate + ADP. It participates in amino-acid biosynthesis; L-arginine biosynthesis; N(2)-acetyl-L-ornithine from L-glutamate: step 2/4. In terms of biological role, catalyzes the ATP-dependent phosphorylation of N-acetyl-L-glutamate. This chain is Acetylglutamate kinase, found in Chlorobium luteolum (strain DSM 273 / BCRC 81028 / 2530) (Pelodictyon luteolum).